A 452-amino-acid chain; its full sequence is Protein mab-21-like 4 (452 aa).

The polypeptide is Protein mab-21-like 4 (Mab21l4) (Mus musculus (Mouse)).